The following is a 429-amino-acid chain: ATP-dependent RNA helicase RhlB (429 aa).

The Q motif motif lies at 9–37 (DKFAQMGLEPEVLAGLESKGFHYCTPIQA). Residues 40–219 (LPLLVEGHDL…YEHMNHPEHV (180 aa)) form the Helicase ATP-binding domain. 53 to 60 (AQTGTGKT) is an ATP binding site. A DEAD box motif is present at residues 165–168 (DEAD). The region spanning 243–390 (KMLLLLSLME…VSKYDREALL (148 aa)) is the Helicase C-terminal domain. The tract at residues 399–429 (VFRNRQPVNRNMRDRQGGGNSNNRRRPPRKS) is disordered.

It belongs to the DEAD box helicase family. RhlB subfamily. Component of the RNA degradosome, which is a multiprotein complex involved in RNA processing and mRNA degradation.

The protein resides in the cytoplasm. The enzyme catalyses ATP + H2O = ADP + phosphate + H(+). Functionally, DEAD-box RNA helicase involved in RNA degradation. Has RNA-dependent ATPase activity and unwinds double-stranded RNA. This chain is ATP-dependent RNA helicase RhlB, found in Aeromonas hydrophila subsp. hydrophila (strain ATCC 7966 / DSM 30187 / BCRC 13018 / CCUG 14551 / JCM 1027 / KCTC 2358 / NCIMB 9240 / NCTC 8049).